A 133-amino-acid chain; its full sequence is Small ribosomal subunit protein uS9 (133 aa).

The tract at residues 101-133 (MKPKGLLTRDPREVERKKYGLKKARRAPQFSKR) is disordered. Residues 107–118 (LTRDPREVERKK) are compositionally biased toward basic and acidic residues. A compositionally biased stretch (basic residues) spans 119–133 (YGLKKARRAPQFSKR).

It belongs to the universal ribosomal protein uS9 family.

The protein is Small ribosomal subunit protein uS9 of Deinococcus radiodurans (strain ATCC 13939 / DSM 20539 / JCM 16871 / CCUG 27074 / LMG 4051 / NBRC 15346 / NCIMB 9279 / VKM B-1422 / R1).